A 585-amino-acid chain; its full sequence is L-gulonolactone oxidase 3 (585 aa).

An N-terminal signal peptide occupies residues 1–24 (MRYSHTLQQFSILSFFVTIWTVQS). In terms of domain architecture, FAD-binding PCMH-type spans 51–233 (KTCHAANVTY…SKVKLSIEKA (183 aa)).

It belongs to the oxygen-dependent FAD-linked oxidoreductase family. Requires FAD as cofactor.

The protein localises to the vacuole. It carries out the reaction L-gulono-1,4-lactone + O2 = L-ascorbate + H2O2 + H(+). The protein operates within cofactor biosynthesis; L-ascorbate biosynthesis. Its function is as follows. Catalyzes the oxidation of L-gulono-1,4-lactone to ascorbic acid. L-gulono-1,4-lactone is oxidized to hydrogen peroxide and L-xylo-hexulonolactone which spontaneously isomerizes to L-ascorbate. In Arabidopsis thaliana (Mouse-ear cress), this protein is L-gulonolactone oxidase 3.